Here is a 1368-residue protein sequence, read N- to C-terminus: DNA-directed RNA polymerase subunit beta (1368 aa).

Belongs to the RNA polymerase beta chain family. As to quaternary structure, the RNAP catalytic core consists of 2 alpha, 1 beta, 1 beta' and 1 omega subunit. When a sigma factor is associated with the core the holoenzyme is formed, which can initiate transcription.

It carries out the reaction RNA(n) + a ribonucleoside 5'-triphosphate = RNA(n+1) + diphosphate. Its function is as follows. DNA-dependent RNA polymerase catalyzes the transcription of DNA into RNA using the four ribonucleoside triphosphates as substrates. This Cupriavidus necator (strain ATCC 17699 / DSM 428 / KCTC 22496 / NCIMB 10442 / H16 / Stanier 337) (Ralstonia eutropha) protein is DNA-directed RNA polymerase subunit beta.